The primary structure comprises 89 residues: Small ribosomal subunit protein uS14 (89 aa).

The protein belongs to the universal ribosomal protein uS14 family. Part of the 30S ribosomal subunit. Contacts proteins S3 and S10.

Its function is as follows. Binds 16S rRNA, required for the assembly of 30S particles and may also be responsible for determining the conformation of the 16S rRNA at the A site. This chain is Small ribosomal subunit protein uS14, found in Chlorobaculum tepidum (strain ATCC 49652 / DSM 12025 / NBRC 103806 / TLS) (Chlorobium tepidum).